The primary structure comprises 743 residues: Phenylalanine ammonia-lyase 1 (743 aa).

Tyrosine 120 serves as the catalytic Proton donor/acceptor. A cross-link (5-imidazolinone (Ala-Gly)) is located at residues 224–226; it reads ASG. Residue serine 225 is modified to 2,3-didehydroalanine (Ser). Asparagine 287, glutamine 377, arginine 383, asparagine 413, lysine 484, glutamate 512, and asparagine 515 together coordinate (E)-cinnamate.

Belongs to the PAL/histidase family. Homotetramer. In terms of processing, contains an active site 4-methylidene-imidazol-5-one (MIO), which is formed autocatalytically by cyclization and dehydration of residues Ala-Ser-Gly.

It is found in the cytoplasm. It catalyses the reaction L-phenylalanine = (E)-cinnamate + NH4(+). It functions in the pathway phenylpropanoid metabolism; trans-cinnamate biosynthesis; trans-cinnamate from L-phenylalanine: step 1/1. Functionally, catalyzes the non-oxidative deamination of L-phenylalanine to form trans-cinnamic acid and a free ammonium ion. Facilitates the commitment step in phenylpropanoid pathways that produce secondary metabolites such as lignins, coumarins and flavonoids. This chain is Phenylalanine ammonia-lyase 1, found in Pleurotus ostreatus (Oyster mushroom).